A 232-amino-acid chain; its full sequence is 7-cyano-7-deazaguanine synthase (232 aa).

8–18 (FSGGQDSTTCL) contributes to the ATP binding site. Residues C187, C196, C199, and C202 each contribute to the Zn(2+) site.

The protein belongs to the QueC family. It depends on Zn(2+) as a cofactor.

The enzyme catalyses 7-carboxy-7-deazaguanine + NH4(+) + ATP = 7-cyano-7-deazaguanine + ADP + phosphate + H2O + H(+). It participates in purine metabolism; 7-cyano-7-deazaguanine biosynthesis. Functionally, catalyzes the ATP-dependent conversion of 7-carboxy-7-deazaguanine (CDG) to 7-cyano-7-deazaguanine (preQ(0)). This is 7-cyano-7-deazaguanine synthase from Shewanella denitrificans (strain OS217 / ATCC BAA-1090 / DSM 15013).